Here is a 499-residue protein sequence, read N- to C-terminus: Potassium voltage-gated channel subfamily A member 2 (499 aa).

The tract at residues 1 to 27 (MTVATGDLTDGSVGFAGHPQDSYDPEP) is disordered. Residues 1–125 (MTVATGDLTD…YELGEEAMEI (125 aa)) form a tetramerization domain region. Residues 1–160 (MTVATGDLTD…LLFEYPESSG (160 aa)) lie on the Cytoplasmic side of the membrane. Residues 161-182 (PARIIAIISVTVILISIVSFCL) traverse the membrane as a helical segment. Residues 183–221 (ETLPVFRDENEDMHGSGGNYYSYPNSTVRFQKSNTFTDP) lie on the Extracellular side of the membrane. Residue N207 is glycosylated (N-linked (GlcNAc...) asparagine). Residues 222–243 (FFIVETLCIIWFSFEFLVRFLA) form a helical membrane-spanning segment. A lipid anchor (S-palmitoyl cysteine) is attached at C244. Residues 244 to 254 (CPSKAVFFTNL) are Cytoplasmic-facing. The chain crosses the membrane as a helical span at residues 255–275 (MNIIDIVAIIPYFITLGTELA). The Extracellular portion of the chain corresponds to 276 to 289 (EKTEDGQQGQQAMS). A helical; Voltage-sensor membrane pass occupies residues 290-310 (LAILRVIRLVRVFRIFKLSRH). Residues 311 to 325 (SKGLQILGQTLNASM) lie on the Cytoplasmic side of the membrane. Positions 312–325 (KGLQILGQTLNASM) are S4-S5 linker. The helical transmembrane segment at 326–347 (RELGLLIFFLFIGVILFSSAVF) threads the bilayer. Residues 348-361 (FAEADERDSQFPSI) are Extracellular-facing. Residues 362–373 (PDAFWWAVVSMT) constitute an intramembrane region (helical). A Selectivity filter motif is present at residues 374-379 (TVGYGD). The stretch at 374–381 (TVGYGDMV) is an intramembrane region. Residues 382-388 (PTTIGGK) are Extracellular-facing. A helical transmembrane segment spans residues 389–417 (IVGSLCAIAGVLTIALPVPVIVSNFNYFY). Residues 418 to 499 (HRETEGEEQA…VNITKMLTDV (82 aa)) are Cytoplasmic-facing. Residues 497–499 (TDV) carry the PDZ-binding motif.

It belongs to the potassium channel family. A (Shaker) (TC 1.A.1.2) subfamily. Kv1.2/KCNA2 sub-subfamily. As to quaternary structure, homotetramer and heterotetramer with other family members. As to expression, detected in tadpole brain and spinal cord.

It is found in the cell membrane. It catalyses the reaction K(+)(in) = K(+)(out). Functionally, voltage-gated potassium channel that mediates transmembrane potassium transport in excitable membranes, primarily in the brain and central nervous system. Prevents aberrant action potential firing and regulates neuronal output. Forms tetrameric potassium-selective channels through which potassium ions pass in accordance with their electrochemical gradient. The channel alternates between opened and closed conformations in response to the voltage difference across the membrane. Can form functional homotetrameric channels and heterotetrameric channels with other family members; the channels characteristics depend critically on the types of channel-forming alpha subunits that are present. Channel properties are modulated by cytoplasmic beta subunits that regulate the subcellular location of the alpha subunits. In vivo, membranes probably contain a mixture of heteromeric potassium channel complexes, making it difficult to assign currents observed in intact tissues to any particular potassium channel family member. Homotetrameric KCNA2 forms a delayed-rectifier potassium channel that opens in response to membrane depolarization, followed by slow spontaneous channel closure. Regulates neuronal excitability and plays a role as pacemaker in the regulation of neuronal action potentials. KCNA2-containing channels play a presynaptic role and prevent hyperexcitability and aberrant action potential firing. Response to toxins that are selective for KCNA2-containing potassium channels suggests that in Purkinje cells, dendritic subthreshold KCNA2-containing potassium channels prevent random spontaneous calcium spikes, suppressing dendritic hyperexcitability without hindering the generation of somatic action potentials, and thereby play an important role in motor coordination. Plays a role in the induction of long-term potentiation of neuron excitability in the CA3 layer of the hippocampus. This Xenopus laevis (African clawed frog) protein is Potassium voltage-gated channel subfamily A member 2 (kcna2).